A 281-amino-acid chain; its full sequence is Undecaprenyl-diphosphatase (281 aa).

7 consecutive transmembrane segments (helical) span residues 49–69, 92–112, 116–136, 152–172, 196–216, 224–244, and 257–277; these read SANT…AWIF, LHIF…DDFI, LFSV…MIAA, MTYK…WPGF, TFIM…ASNI, ILFY…SIRL, and FAIY…GFGI.

It belongs to the UppP family.

The protein localises to the cell membrane. The enzyme catalyses di-trans,octa-cis-undecaprenyl diphosphate + H2O = di-trans,octa-cis-undecaprenyl phosphate + phosphate + H(+). Catalyzes the dephosphorylation of undecaprenyl diphosphate (UPP). Confers resistance to bacitracin. The protein is Undecaprenyl-diphosphatase of Macrococcus caseolyticus (strain JCSC5402) (Macrococcoides caseolyticum).